A 472-amino-acid chain; its full sequence is 2-methylcitrate synthase, mitochondrial (472 aa).

Residues 1-29 constitute a mitochondrion transit peptide; sequence MALNLTSSRRALGSLKPLTRAAFSGVRGY. Residues arginine 75 and lysine 193 each coordinate CoA. Histidine 271 lines the oxaloacetate pocket. A CoA-binding site is contributed by leucine 306. Histidine 307 is an active-site residue. Residues valine 348, glycine 350, and tyrosine 351 each contribute to the CoA site. Oxaloacetate is bound by residues histidine 353 and arginine 362. Histidine 353 is an active-site residue. Residues threonine 402, lysine 403, and asparagine 408 each contribute to the CoA site. Aspartate 410 is a catalytic residue. Arginine 436 and arginine 456 together coordinate oxaloacetate.

It belongs to the citrate synthase family. As to quaternary structure, homodimer.

The protein localises to the mitochondrion matrix. It catalyses the reaction propanoyl-CoA + oxaloacetate + H2O = (2S,3S)-2-methylcitrate + CoA + H(+). The catalysed reaction is oxaloacetate + acetyl-CoA + H2O = citrate + CoA + H(+). The protein operates within organic acid metabolism; propanoate degradation. Functionally, component of the methylcitrate cycle that catalyzes the synthesis of (2S,3S)-2-methylcitrate from propionyl-CoA and oxaloacetate. Plays an important role in detoxification of propionyl-CoA, an inhibitor of both primary and secondary metabolism. Also has citrate synthase activity using as substrates acetyl-CoA and oxaloacetate. The chain is 2-methylcitrate synthase, mitochondrial from Gibberella moniliformis (Maize ear and stalk rot fungus).